A 209-amino-acid polypeptide reads, in one-letter code: Small ribosomal subunit protein uS5 (209 aa).

Residues 1–11 (MTQPNTQTTPN) are compositionally biased toward polar residues. Residues 1–55 (MTQPNTQTTPNDVPAAAEGQQEQQQQQRRGGGRERRGGGRRGDRRGQERDSEWQE) are disordered. Positions 18–28 (EGQQEQQQQQR) are enriched in low complexity. Basic and acidic residues predominate over residues 31 to 55 (GGRERRGGGRRGDRRGQERDSEWQE). The S5 DRBM domain maps to 53–116 (WQERVVQIRR…ADGKKHLVKV (64 aa)).

The protein belongs to the universal ribosomal protein uS5 family. As to quaternary structure, part of the 30S ribosomal subunit. Contacts proteins S4 and S8.

In terms of biological role, with S4 and S12 plays an important role in translational accuracy. Located at the back of the 30S subunit body where it stabilizes the conformation of the head with respect to the body. In Prochlorococcus marinus (strain MIT 9313), this protein is Small ribosomal subunit protein uS5.